Reading from the N-terminus, the 367-residue chain is Aurora kinase (367 aa).

Residues 30 to 49 (TTATNGAPPQARVQPGKGYR) form a disordered region. Residues 109 to 360 (FEIGKVLGKG…LKEVKKHPWI (252 aa)) enclose the Protein kinase domain. Residues 115 to 123 (LGKGKFGRV) and Lys-138 contribute to the ATP site. Asp-232 acts as the Proton acceptor in catalysis.

It belongs to the protein kinase superfamily. Ser/Thr protein kinase family. Aurora subfamily.

Its subcellular location is the nucleus. The protein resides in the cytoplasm. It is found in the cytoskeleton. It localises to the spindle. The protein localises to the chromosome. Its subcellular location is the centromere. The protein resides in the kinetochore. The catalysed reaction is L-seryl-[protein] + ATP = O-phospho-L-seryl-[protein] + ADP + H(+). The enzyme catalyses L-threonyl-[protein] + ATP = O-phospho-L-threonyl-[protein] + ADP + H(+). Functionally, component of the chromosomal passenger complex (CPC), a complex that acts as a key regulator of chromosome segregation and cytokinesis. Has a role in error-correction of aberrent kinetochore-microtubule attachments to ensure that sister kinetochores become bioriented and connect to opposite poles by promoting spindle assembly checkpoint signaling. The protein is Aurora kinase (IPL1) of Eremothecium gossypii (strain ATCC 10895 / CBS 109.51 / FGSC 9923 / NRRL Y-1056) (Yeast).